The primary structure comprises 304 residues: Homoserine kinase (304 aa).

ATP is bound at residue 91–101 (PLGKGMGSSAA).

This sequence belongs to the GHMP kinase family. Homoserine kinase subfamily.

It is found in the cytoplasm. It carries out the reaction L-homoserine + ATP = O-phospho-L-homoserine + ADP + H(+). It functions in the pathway amino-acid biosynthesis; L-threonine biosynthesis; L-threonine from L-aspartate: step 4/5. In terms of biological role, catalyzes the ATP-dependent phosphorylation of L-homoserine to L-homoserine phosphate. This is Homoserine kinase from Solibacter usitatus (strain Ellin6076).